A 360-amino-acid chain; its full sequence is Probable arginine kinase ZC434.8 (360 aa).

In terms of domain architecture, Phosphagen kinase N-terminal spans 10–92 (SIEEVYTKLQ…FNPVIEEYHN (83 aa)). 65-69 (GVGIY) contributes to the substrate binding site. In terms of domain architecture, Phosphagen kinase C-terminal spans 122–359 (FIVSTRIRCG…KKLIELEKAA (238 aa)). ATP is bound by residues 125–129 (STRIR) and His189. Glu229 is a substrate binding site. Arg233 provides a ligand contact to ATP. Residue Cys275 coordinates substrate. ATP is bound by residues 284-288 (RASVH), 312-317 (RGIHGE), and Asp327. A substrate-binding site is contributed by Glu317.

It belongs to the ATP:guanido phosphotransferase family.

The enzyme catalyses L-arginine + ATP = N(omega)-phospho-L-arginine + ADP + H(+). In Caenorhabditis elegans, this protein is Probable arginine kinase ZC434.8.